We begin with the raw amino-acid sequence, 471 residues long: Putative multidrug resistance protein MdtD (471 aa).

The Periplasmic portion of the chain corresponds to 1-11 (MTDLPDSTRWQ). Residues 12 to 32 (LWIVAFGFFMQSLDTTIVNTA) traverse the membrane as a helical segment. Residues 33-48 (LPSMAQSLGESPLHMH) lie on the Cytoplasmic side of the membrane. Residues 49–69 (MVIVSYVLTVAVMLPASGWLA) form a helical membrane-spanning segment. Over 70-76 (DKVGVRN) the chain is Periplasmic. A helical membrane pass occupies residues 77 to 97 (IFFTAIVLFTLGSLFCALSGT). At 98–101 (LNEL) the chain is on the cytoplasmic side. Residues 102 to 124 (LLARALQGVGGAMMVPVGRLTVM) traverse the membrane as a helical segment. Topologically, residues 125-137 (KIVPREQYMAAMT) are periplasmic. A helical transmembrane segment spans residues 138–158 (FVTLPGQVGPLLGPALGGLLV). The Cytoplasmic portion of the chain corresponds to 159-164 (EYASWH). The chain crosses the membrane as a helical span at residues 165 to 185 (WIFLINIPVGIIGAIATLMLM). Residues 186-196 (PNYTMQTRRFD) lie on the Periplasmic side of the membrane. A helical transmembrane segment spans residues 197–217 (LSGFLLLAVGMAVLTLALDGS). Topologically, residues 218–224 (KGTGLSP) are cytoplasmic. The chain crosses the membrane as a helical span at residues 225-245 (LTIDGLVAVGVVALVLYLLHA). The Periplasmic portion of the chain corresponds to 246 to 262 (RNNNRALFSLKLFRTRT). The helical transmembrane segment at 263–283 (FSLGLAGSFAGRIGSGMLPFM) threads the bilayer. The Cytoplasmic portion of the chain corresponds to 284–285 (TP). Residues 286-306 (VFLQIGLGFSPFHAGLMMIPM) traverse the membrane as a helical segment. Residues 307–341 (VLGSMGMKRIVVQVVNRFGYRRVLVATTLGLSLVT) lie on the Periplasmic side of the membrane. The helical transmembrane segment at 342–362 (LLFMTTALLGWYYVLPFVLFL) threads the bilayer. Residues 363 to 395 (QGMVNSTRFSSMNTLTLKDLPDNLASSGNSLLS) lie on the Cytoplasmic side of the membrane. The chain crosses the membrane as a helical span at residues 396–416 (MIMQLSMSIGVTIAGLLLGLF). At 417-430 (GSQHVSVDSGTTQT) the chain is on the periplasmic side. A helical transmembrane segment spans residues 431–451 (VFMYTWLSMAFIIALPAFIFA). The Cytoplasmic portion of the chain corresponds to 452-471 (RVPNDTHQNVAISRRKRSAQ).

It belongs to the major facilitator superfamily. TCR/Tet family.

It is found in the cell inner membrane. The polypeptide is Putative multidrug resistance protein MdtD (Escherichia coli O8 (strain IAI1)).